The chain runs to 214 residues: Predicted GPI-anchored protein 57 (214 aa).

The N-terminal stretch at 1 to 18 (MLFTQLIILFTFISQIIC) is a signal peptide. Residues 36–101 (RGSSGHSSGG…SSGSSSGSRN (66 aa)) are disordered. The segment covering 42–60 (SSGGGHSSSGSHSSGGGHS) has biased composition (gly residues). Over residues 76–85 (SGSSSGSSSG) the composition is skewed to low complexity. The N-linked (GlcNAc...) asparagine glycan is linked to Asn-182. A lipid anchor (GPI-anchor amidated glycine) is attached at Gly-191. Positions 192–214 (VSLNIPSTHFYVIGLAAAYSIVL) are cleaved as a propeptide — removed in mature form.

It belongs to the PGA37 family.

It localises to the secreted. The protein resides in the cell membrane. In terms of biological role, predicted GPI-anchored protein which may have a role during host infection. The chain is Predicted GPI-anchored protein 57 (PGA57) from Candida albicans (strain SC5314 / ATCC MYA-2876) (Yeast).